A 303-amino-acid polypeptide reads, in one-letter code: Small ribosomal subunit protein uS2 (303 aa).

Residues 258–303 (ATLRENAVVTENEVKKTDEEEGASSEAARADAQNEEAVAKPGEEVE) form a disordered region. Positions 294-303 (AVAKPGEEVE) are enriched in basic and acidic residues.

Belongs to the universal ribosomal protein uS2 family.

The sequence is that of Small ribosomal subunit protein uS2 from Bifidobacterium animalis subsp. lactis (strain AD011).